The chain runs to 740 residues: NAD(P)H-quinone oxidoreductase subunit 5, chloroplastic (740 aa).

Transmembrane regions (helical) follow at residues 9-29 (WIIP…LILF), 40-60 (WAFQ…YLSI), 89-109 (IDPL…MVLI), 125-145 (FAYM…SNLI), 147-167 (IYIF…FWFT), 185-205 (GDFG…SFEF), 219-239 (NEVD…GAVA), 258-278 (TPIS…FLVA), 286-306 (VIPY…LLGA), 327-347 (LGYM…FHLI), 354-374 (ALLF…VGYS), 396-416 (ITFL…CFWS), 425-445 (WLYS…TAFY), 543-563 (LFPI…GIPF), 602-622 (VLSV…YKPI), and 717-737 (SYLF…YLLF).

Belongs to the complex I subunit 5 family. NDH is composed of at least 16 different subunits, 5 of which are encoded in the nucleus.

The protein localises to the plastid. It localises to the chloroplast thylakoid membrane. The enzyme catalyses a plastoquinone + NADH + (n+1) H(+)(in) = a plastoquinol + NAD(+) + n H(+)(out). It carries out the reaction a plastoquinone + NADPH + (n+1) H(+)(in) = a plastoquinol + NADP(+) + n H(+)(out). Functionally, NDH shuttles electrons from NAD(P)H:plastoquinone, via FMN and iron-sulfur (Fe-S) centers, to quinones in the photosynthetic chain and possibly in a chloroplast respiratory chain. The immediate electron acceptor for the enzyme in this species is believed to be plastoquinone. Couples the redox reaction to proton translocation, and thus conserves the redox energy in a proton gradient. The polypeptide is NAD(P)H-quinone oxidoreductase subunit 5, chloroplastic (ndhF) (Nicotiana tomentosiformis (Tobacco)).